The sequence spans 275 residues: Large ribosomal subunit protein uL2 (275 aa).

Positions 223–275 are disordered; that stretch reads VAMNPVDHPHGGGEGRTSGGRHPVTPWGVPTKGYKTRSNKRTDKYIVRRRNKK.

The protein belongs to the universal ribosomal protein uL2 family. In terms of assembly, part of the 50S ribosomal subunit. Forms a bridge to the 30S subunit in the 70S ribosome.

In terms of biological role, one of the primary rRNA binding proteins. Required for association of the 30S and 50S subunits to form the 70S ribosome, for tRNA binding and peptide bond formation. It has been suggested to have peptidyltransferase activity; this is somewhat controversial. Makes several contacts with the 16S rRNA in the 70S ribosome. The polypeptide is Large ribosomal subunit protein uL2 (Shewanella loihica (strain ATCC BAA-1088 / PV-4)).